A 335-amino-acid polypeptide reads, in one-letter code: Aspartate--ammonia ligase (335 aa).

Belongs to the class-II aminoacyl-tRNA synthetase family. AsnA subfamily.

The protein localises to the cytoplasm. The catalysed reaction is L-aspartate + NH4(+) + ATP = L-asparagine + AMP + diphosphate + H(+). It participates in amino-acid biosynthesis; L-asparagine biosynthesis; L-asparagine from L-aspartate (ammonia route): step 1/1. The chain is Aspartate--ammonia ligase from Pediococcus pentosaceus (strain ATCC 25745 / CCUG 21536 / LMG 10740 / 183-1w).